A 519-amino-acid chain; its full sequence is Sterile alpha motif domain-containing protein 1 (519 aa).

Over residues methionine 1 to glutamate 11 the composition is skewed to pro residues. Disordered stretches follow at residues methionine 1–histidine 30 and tyrosine 87–leucine 232. The span at threonine 12 to proline 29 shows a compositional bias: low complexity. The SAMD1-like winged helix (WH) domain maps to serine 23–valine 99. Threonine 107 carries the post-translational modification Phosphothreonine. A compositionally biased stretch (pro residues) spans proline 108 to valine 133. Residues alanine 134–alanine 147 are compositionally biased toward low complexity. Phosphoserine is present on serine 150. The span at glycine 157–leucine 166 shows a compositional bias: low complexity. The segment covering alanine 167–glutamate 217 has biased composition (pro residues). Low complexity predominate over residues glycine 218–valine 230. Serine 242 carries the phosphoserine modification. Basic and acidic residues predominate over residues glutamate 261–arginine 271. 2 disordered regions span residues glutamate 261–cysteine 381 and proline 417–aspartate 439. The span at lysine 308 to valine 325 shows a compositional bias: acidic residues. An SAM domain is found at tryptophan 443–aspartate 511.

Homopolymerize into a closed pentameric ring. Interacts (via SAM domain) with L3MBTL3 (via SAM domain); the interaction mediates L3MBTL3 binding to chromatin. Interacts (via WH domain) with KDM1A; the interaction modulates KDM1A function. Expressed to similar levels in different organs. Expressed at higher levels in bone marrow, osteoclasts and spleen. Expressed in vascular smooth muscle cells.

It localises to the nucleus. The protein resides in the chromosome. It is found in the secreted. Unmethylated CpG islands (CGIs)-binding protein which localizes to H3K4me3-decorated CGIs, where it acts as a transcriptional repressor. Tethers L3MBTL3 to chromatin and interacts with the KDM1A histone demethylase complex to modulate H3K4me2 and H3K4me3 levels at CGIs. Plays a role in atherogenesis by binding with LDL on cell surface and promoting LDL oxidation which leads to the formation of foam cell. In Mus musculus (Mouse), this protein is Sterile alpha motif domain-containing protein 1.